The sequence spans 413 residues: Serine hydroxymethyltransferase (413 aa).

(6S)-5,6,7,8-tetrahydrofolate is bound by residues L119 and 123 to 125 (GHL). N6-(pyridoxal phosphate)lysine is present on K228.

This sequence belongs to the SHMT family. In terms of assembly, homodimer. Requires pyridoxal 5'-phosphate as cofactor.

It localises to the cytoplasm. It catalyses the reaction (6R)-5,10-methylene-5,6,7,8-tetrahydrofolate + glycine + H2O = (6S)-5,6,7,8-tetrahydrofolate + L-serine. It functions in the pathway one-carbon metabolism; tetrahydrofolate interconversion. Its pathway is amino-acid biosynthesis; glycine biosynthesis; glycine from L-serine: step 1/1. Its function is as follows. Catalyzes the reversible interconversion of serine and glycine with tetrahydrofolate (THF) serving as the one-carbon carrier. This reaction serves as the major source of one-carbon groups required for the biosynthesis of purines, thymidylate, methionine, and other important biomolecules. Also exhibits THF-independent aldolase activity toward beta-hydroxyamino acids, producing glycine and aldehydes, via a retro-aldol mechanism. The chain is Serine hydroxymethyltransferase from Desulfatibacillum aliphaticivorans.